The sequence spans 621 residues: Chaperone protein HtpG (621 aa).

Positions M1–R328 are a; substrate-binding. The segment at E329–R544 is b. A disordered region spans residues V479–D498. A compositionally biased stretch (basic and acidic residues) spans S486–D498. The interval F545–L621 is c.

Belongs to the heat shock protein 90 family. In terms of assembly, homodimer.

It is found in the cytoplasm. Its function is as follows. Molecular chaperone. Has ATPase activity. The polypeptide is Chaperone protein HtpG (Rickettsia bellii (strain OSU 85-389)).